The chain runs to 121 residues: Large ribosomal subunit protein uL14 (121 aa).

The protein belongs to the universal ribosomal protein uL14 family. Part of the 50S ribosomal subunit. Forms a cluster with proteins L3 and L19. In the 70S ribosome, L14 and L19 interact and together make contacts with the 16S rRNA in bridges B5 and B8.

Binds to 23S rRNA. Forms part of two intersubunit bridges in the 70S ribosome. In Synechococcus sp. (strain CC9311), this protein is Large ribosomal subunit protein uL14.